Consider the following 171-residue polypeptide: Co-chaperone protein HscB (171 aa).

Residues 2–74 (DYFTLFGLPA…LTRAEYLLSL (73 aa)) enclose the J domain.

The protein belongs to the HscB family. Interacts with HscA and stimulates its ATPase activity. Interacts with IscU.

Its function is as follows. Co-chaperone involved in the maturation of iron-sulfur cluster-containing proteins. Seems to help targeting proteins to be folded toward HscA. This chain is Co-chaperone protein HscB, found in Salmonella agona (strain SL483).